A 370-amino-acid chain; its full sequence is MKDLKVTPLRGVYEEYGGKIVDFAGYELPTQFKGFLHEHHTVREKAGLFDVSHMGEAMVTGKDAGKFIQYLMTNDINVLKDNEVLYTFMCNEDGGVIDDLLVYKFAEDEFFLVINASNKDKDVKWIMDHKGDFDVEIVDVSDSIAQLAFQGPLAEEILQKIVDVDLQEIKFFKLKRDVLVNGKKCLVSRTGYTGEDGFEIYCKPEDAKGLWHAILNAGKEEGAQPIGLGARDTLRFEASLLLYGNEMDETITPLEVGMGFFAKLKIEEDFIGKDALIKQKAEGVTRKLVGFELLDKGIPRHGYEVIKDGKVIGHVTTGYKSPTLNKAIGLALVEEQYSKIGTEFNIKVRKKELKAVAIDKRFYTKKTKTK.

This sequence belongs to the GcvT family. In terms of assembly, the glycine cleavage system is composed of four proteins: P, T, L and H.

The enzyme catalyses N(6)-[(R)-S(8)-aminomethyldihydrolipoyl]-L-lysyl-[protein] + (6S)-5,6,7,8-tetrahydrofolate = N(6)-[(R)-dihydrolipoyl]-L-lysyl-[protein] + (6R)-5,10-methylene-5,6,7,8-tetrahydrofolate + NH4(+). In terms of biological role, the glycine cleavage system catalyzes the degradation of glycine. In Clostridium botulinum (strain ATCC 19397 / Type A), this protein is Aminomethyltransferase.